The following is a 634-amino-acid chain: Microtubule-associated protein 70-2 (634 aa).

A disordered region spans residues Met-1–Ser-57. Residues Val-25–Val-35 show a composition bias toward polar residues. The span at Ser-36–Ser-47 shows a compositional bias: low complexity. Residues Asp-74–Leu-392 are a coiled coil. A required for targeting to microtubules region spans residues Ile-258–Ser-494. Polar residues-rich tracts occupy residues Arg-393–Gln-417 and Met-443–Ser-464. 2 disordered regions span residues Arg-393–Gly-526 and Val-594–Gln-634. Residues Leu-532 to Arg-601 adopt a coiled-coil conformation. Positions Phe-605 to Gln-616 are enriched in polar residues.

It belongs to the MAP70 family.

It localises to the cytoplasm. It is found in the cytoskeleton. In terms of biological role, plant-specific protein that interact with microtubules. The protein is Microtubule-associated protein 70-2 (MAP70.2) of Arabidopsis thaliana (Mouse-ear cress).